A 623-amino-acid chain; its full sequence is Ciliated left-right organizer metallopeptidase (623 aa).

The signal sequence occupies residues 1 to 20 (MSFLLCIGILLLPWFPCVCG). Topologically, residues 21–578 (KCIFDQIQRS…LFLVSEAKIS (558 aa)) are extracellular. H249 provides a ligand contact to Zn(2+). Residue E250 is part of the active site. Zn(2+)-binding residues include H253 and H326. Residues 579 to 599 (LAAVLSLMAVFALLSAAVLLY) form a helical membrane-spanning segment. Residues 600–623 (RKNLSVRVHAASYRTPLPHILYRN) lie on the Cytoplasmic side of the membrane.

The protein belongs to the peptidase M8 family. Zn(2+) is required as a cofactor. Expressed specifically in dorsal forerunner cells (DFCs) that form a ciliated Kupffer's vesicle later.

Its subcellular location is the membrane. Functionally, plays an essential role for patterning the left-right axis. Requires solely on the left side, downstream of the leftward flow, but upstream of dand5, a nodal inhibitor involved in left-right patterning. This Danio rerio (Zebrafish) protein is Ciliated left-right organizer metallopeptidase (cirop).